Consider the following 142-residue polypeptide: ATP synthase epsilon chain (142 aa).

The protein belongs to the ATPase epsilon chain family. As to quaternary structure, F-type ATPases have 2 components, CF(1) - the catalytic core - and CF(0) - the membrane proton channel. CF(1) has five subunits: alpha(3), beta(3), gamma(1), delta(1), epsilon(1). CF(0) has three main subunits: a, b and c.

It localises to the cell inner membrane. Produces ATP from ADP in the presence of a proton gradient across the membrane. This chain is ATP synthase epsilon chain, found in Shewanella oneidensis (strain ATCC 700550 / JCM 31522 / CIP 106686 / LMG 19005 / NCIMB 14063 / MR-1).